The primary structure comprises 651 residues: Probable potassium transport system protein Kup (651 aa).

12 helical membrane passes run 30 to 50, 71 to 91, 124 to 144, 158 to 178, 190 to 210, 233 to 253, 268 to 288, 310 to 330, 358 to 378, 387 to 407, 413 to 433, and 437 to 457; these read LALAALGIVFGDIGTSVLYSL, IISMIFWSILLVVCVKYVIFV, LLLGIVGAGLFYGDSFITPAI, PDAEKIVLPASVVILTLLFIV, FGPVMATWFLTLAALGIPWII, AMAFIAMGAVVLTITGAEALY, WFGLVLPCLLINYLGQGAMIL, LVTIATMATVIASQAVISGAF, IYIPEVNWTLFIGVLALILIF, AYGLAVTGTFLLTTSLFLVLA, WPMWALIFFGVIVGGVELSIF, and LLKIASGGWIPLLFATIVVII.

This sequence belongs to the HAK/KUP transporter (TC 2.A.72) family.

It localises to the cell membrane. It carries out the reaction K(+)(in) + H(+)(in) = K(+)(out) + H(+)(out). In terms of biological role, transport of potassium into the cell. Likely operates as a K(+):H(+) symporter. The protein is Probable potassium transport system protein Kup of Cutibacterium acnes (strain DSM 16379 / KPA171202) (Propionibacterium acnes).